Reading from the N-terminus, the 159-residue chain is 2-C-methyl-D-erythritol 2,4-cyclodiphosphate synthase (159 aa).

A divalent metal cation is bound by residues Asp-8 and His-10. Residues 8-10 and 34-35 each bind 4-CDP-2-C-methyl-D-erythritol 2-phosphate; these read DVH and HS. His-42 contributes to the a divalent metal cation binding site. 4-CDP-2-C-methyl-D-erythritol 2-phosphate contacts are provided by residues 56–58, 61–65, 100–106, 132–135, Phe-139, and Arg-142; these read DIG, FPDTD, AQAPKML, and TTTE.

It belongs to the IspF family. Homotrimer. The cofactor is a divalent metal cation.

It carries out the reaction 4-CDP-2-C-methyl-D-erythritol 2-phosphate = 2-C-methyl-D-erythritol 2,4-cyclic diphosphate + CMP. Its pathway is isoprenoid biosynthesis; isopentenyl diphosphate biosynthesis via DXP pathway; isopentenyl diphosphate from 1-deoxy-D-xylulose 5-phosphate: step 4/6. In terms of biological role, involved in the biosynthesis of isopentenyl diphosphate (IPP) and dimethylallyl diphosphate (DMAPP), two major building blocks of isoprenoid compounds. Catalyzes the conversion of 4-diphosphocytidyl-2-C-methyl-D-erythritol 2-phosphate (CDP-ME2P) to 2-C-methyl-D-erythritol 2,4-cyclodiphosphate (ME-CPP) with a corresponding release of cytidine 5-monophosphate (CMP). The sequence is that of 2-C-methyl-D-erythritol 2,4-cyclodiphosphate synthase from Salmonella dublin (strain CT_02021853).